The chain runs to 370 residues: Alpha-(1,3)-fucosyltransferase 7 (370 aa).

Residues 1-36 (MVQGCLCWRGCCDLKTSFPWVTNSRRLWMNCIGCNP) lie on the Cytoplasmic side of the membrane. Residues 37 to 59 (VWRLRAWGCLAGGTTLMVIWLFW) form a helical; Signal-anchor for type II membrane protein membrane-spanning segment. Topologically, residues 60–370 (LLRSVPGGAP…YEDLESWFQA (311 aa)) are lumenal. N-linked (GlcNAc...) asparagine glycosylation occurs at asparagine 86. A disulfide bond links cysteine 96 and cysteine 104. An N-linked (GlcNAc...) asparagine glycan is attached at asparagine 109. Cysteine 239 and cysteine 242 form a disulfide bridge. Asparagine 319 is a glycosylation site (N-linked (GlcNAc...) asparagine). Cysteine 346 and cysteine 349 are disulfide-bonded.

It belongs to the glycosyltransferase 10 family. Post-translationally, N-glycosylated. In terms of tissue distribution, expressed in lymph node and kidney.

The protein localises to the golgi apparatus. It is found in the golgi stack membrane. It carries out the reaction an N-acetyl-alpha-neuraminyl-(2-&gt;3)-beta-D-galactosyl-(1-&gt;4)-N-acetyl-beta-D-glucosaminyl derivative + GDP-beta-L-fucose = an alpha-Neu5Ac-(2-&gt;3)-beta-D-Gal-(1-&gt;4)-[alpha-L-Fuc-(1-&gt;3)]-beta-D-GlcNAc derivative + GDP + H(+). The enzyme catalyses a neolactoside IV(3)-alpha-NeuAc-nLc4Cer + GDP-beta-L-fucose = a neolactoside IV(3)-alpha-NeuNAc,III(3)-alpha-Fuc-nLc4Cer + GDP + H(+). The catalysed reaction is a neolactoside VI(3)-alpha-NeuNAc-nLc6Cer + GDP-beta-L-fucose = a neolactoside VI(3)-alpha-NeuAc,V(3)-alphaFuc-nLc6Cer + GDP + H(+). It catalyses the reaction an alpha-Neu5Ac-(2-&gt;3)-beta-D-Gal-(1-&gt;4)-beta-D-GlcNAc-(1-&gt;3)-beta-D-Gal-(1-&gt;4)-[alpha-L-Fuc-(1-&gt;3)]-beta-D-GlcNAc derivative + GDP-beta-L-fucose = an alpha-Neu5Ac-(2-&gt;3)-beta-D-Gal-(1-&gt;4)-[alpha-L-Fuc-(1-&gt;3)]-beta-D-GlcNAc-(1-&gt;3)-beta-D-Gal-(1-&gt;4)-[alpha-L-Fuc-(1-&gt;3)]-beta-D-GlcNAc derivative + GDP + H(+). It carries out the reaction an alpha-Neu5Ac-(2-&gt;3)-beta-D-Gal-(1-&gt;4)-beta-D-GlcNAc6S derivative + GDP-beta-L-fucose = an alpha-Neu5Ac-(2-&gt;3)-beta-D-Gal-(1-&gt;4)-[alpha-L-Fuc-(1-&gt;3)]-beta-D-GlcNAc6S derivative + GDP + H(+). The enzyme catalyses alpha-Neu5Ac-(2-&gt;3)-beta-D-Gal-(1-&gt;4)-beta-D-GlcNAc-(1-&gt;3)-beta-D-Gal-(1-&gt;4)-D-Glc + GDP-beta-L-fucose = alpha-Neu5Ac-(2-&gt;3)-beta-D-Gal-(1-&gt;4)-[alpha-L-Fuc-(1-&gt;3)]-beta-D-GlcNAc-(1-&gt;3)-beta-D-Gal-(1-&gt;4)-D-Glc + GDP + H(+). The catalysed reaction is alpha-Neu5Ac-(2-&gt;3)-beta-D-Gal-(1-&gt;4)-beta-D-GlcNAc-(1-&gt;3)-beta-D-Gal-(1-&gt;4)-[alpha-L-Fuc-(1-&gt;3)]-beta-D-GlcNAc-(1-&gt;3)-beta-D-Gal-(1-&gt;4)-beta-D-GlcNAc + GDP-beta-L-fucose = alpha-Neu5Ac-(2-&gt;3)-beta-D-Gal-(1-&gt;4)-[alpha-L-Fuc-(1-&gt;3)]-beta-D-GlcNAc-(1-&gt;3)-beta-D-Gal-(1-&gt;4)-[alpha-L-Fuc-(1-&gt;3)]-beta-D-GlcNAc-(1-&gt;3)-beta-D-Gal-(1-&gt;4)-beta-D-GlcNAc + GDP + H(+). It catalyses the reaction alpha-Neu5Ac-(2-&gt;3)-beta-D-Gal-(1-&gt;4)-beta-D-GlcNAc-(1-&gt;3)-beta-D-Gal-(1-&gt;4)-beta-D-GlcNAc-(1-&gt;3)-beta-D-Gal-(1-&gt;4)-beta-D-GlcNAc + GDP-beta-L-fucose = alpha-Neu5Ac-(2-&gt;3)-beta-D-Gal-(1-&gt;4)-[alpha-L-Fuc-(1-&gt;3)]-beta-D-GlcNAc-(1-&gt;3)-beta-D-Gal-(1-&gt;4)-beta-D-GlcNAc-(1-&gt;3)-beta-D-Gal-(1-&gt;4)-beta-D-GlcNAc + GDP + H(+). It participates in protein modification; protein glycosylation. Inhibited by NaCl. Inhibited by GDP in a concentration dependent manner, with an IC(50) value of 93 uM. Also inhibited by GMP and GTP. Inhibited by N-ethylmaleimide. Activated by poly(ethylene glycol) by enhancing the thermal stability of FUT7. Activated by Mn2+, Ca2+, and Mg2+. Both panosialin A and B inhibit activity with IC(50) values of 4.8 and 5.3 ug/ml, respectively. Inhibited by gallic acid (GA) and (-)-epigallocatechin gallate (EGCG) in a time-dependent and irreversible manner with IC(50) values of 60 and 700 nM, respectively. Its function is as follows. Catalyzes the transfer of L-fucose, from a guanosine diphosphate-beta-L-fucose, to the N-acetyl glucosamine (GlcNAc) of a distal alpha2,3 sialylated lactosamine unit of a glycoprotein or a glycolipid-linked sialopolylactosamines chain through an alpha-1,3 glycosidic linkage and participates in the final fucosylation step in the biosynthesis of the sialyl Lewis X (sLe(x)), a carbohydrate involved in cell and matrix adhesion during leukocyte trafficking and fertilization. In vitro, also synthesizes sialyl-dimeric-Lex structures, from VIM-2 structures and both di-fucosylated and trifucosylated structures from mono-fucosylated precursors. However does not catalyze alpha 1-3 fucosylation when an internal alpha 1-3 fucosylation is present in polylactosamine chain and the fucosylation rate of the internal GlcNAc residues is reduced once fucose has been added to the distal GlcNAc. Also catalyzes the transfer of a fucose from GDP-beta-fucose to the 6-sulfated a(2,3)sialylated substrate to produce 6-sulfo sLex mediating significant L-selectin-dependent cell adhesion. Through sialyl-Lewis(x) biosynthesis, can control SELE- and SELP-mediated cell adhesion with leukocytes and allows leukocytes tethering and rolling along the endothelial tissue thereby enabling the leukocytes to accumulate at a site of inflammation. May enhance embryo implantation through sialyl Lewis X (sLeX)-mediated adhesion of embryo cells to endometrium. May affect insulin signaling by up-regulating the phosphorylation and expression of some signaling molecules involved in the insulin-signaling pathway through SLe(x) which is present on the glycans of the INSRR alpha subunit. This chain is Alpha-(1,3)-fucosyltransferase 7, found in Rattus norvegicus (Rat).